The following is a 682-amino-acid chain: DNA ligase (682 aa).

NAD(+)-binding positions include 43 to 47 (DSEYD), 92 to 93 (SL), and D123. The active-site N6-AMP-lysine intermediate is K125. NAD(+)-binding residues include R146, E184, K302, and K326. The Zn(2+) site is built by C420, C423, C438, and C443. A BRCT domain is found at 603–682 (TTKGFFTGKK…TFLQKLLIVL (80 aa)).

It belongs to the NAD-dependent DNA ligase family. LigA subfamily. The cofactor is Mg(2+). It depends on Mn(2+) as a cofactor.

It carries out the reaction NAD(+) + (deoxyribonucleotide)n-3'-hydroxyl + 5'-phospho-(deoxyribonucleotide)m = (deoxyribonucleotide)n+m + AMP + beta-nicotinamide D-nucleotide.. In terms of biological role, DNA ligase that catalyzes the formation of phosphodiester linkages between 5'-phosphoryl and 3'-hydroxyl groups in double-stranded DNA using NAD as a coenzyme and as the energy source for the reaction. It is essential for DNA replication and repair of damaged DNA. The chain is DNA ligase from Lawsonia intracellularis (strain PHE/MN1-00).